Here is a 761-residue protein sequence, read N- to C-terminus: Protein ACTIVITY OF BC1 COMPLEX KINASE 8, chloroplastic (761 aa).

Residues 1 to 57 constitute a chloroplast transit peptide; the sequence is MATSSSSSSSLLLPNINFNSRQSPTITRSVSIAGIFLPRNRLSYNHNLRIRTRLIRA. The Protein kinase domain maps to 288–648; the sequence is RFDYEPIAAA…VKDLRKRWDR (361 aa). Residues 294–302 and Lys-315 each bind ATP; that span reads IAAASLGQV. The Proton acceptor role is filled by Asp-452. The helical transmembrane segment at 725-745 threads the bilayer; it reads PATIAYTVCAFFSLQVLIGII.

Belongs to the protein kinase superfamily. ADCK protein kinase family. As to expression, mostly expressed in leaves and flowers, and, to a lower extent, in stems, siliques and roots.

It is found in the plastid. The protein localises to the chloroplast envelope. Its subcellular location is the chloroplast membrane. The enzyme catalyses L-seryl-[protein] + ATP = O-phospho-L-seryl-[protein] + ADP + H(+). It carries out the reaction L-threonyl-[protein] + ATP = O-phospho-L-threonyl-[protein] + ADP + H(+). Involved in resistance to oxidative stress (e.g. hydrogen peroxide H(2)O(2)), high light and heavy metals (e.g. cadmium ions Cd(2+)). Influences responses to reactive oxygen species (ROS) production. Together with SIA1, regulates iron distribution within the chloroplast and mediates the oxidative stress response. Together with ABC1K7, influences chloroplast lipid synthesis/accumulation and modulates chloroplast membrane composition in response to stress. The chain is Protein ACTIVITY OF BC1 COMPLEX KINASE 8, chloroplastic from Arabidopsis thaliana (Mouse-ear cress).